A 205-amino-acid chain; its full sequence is S-crystallin SL11 (205 aa).

In terms of domain architecture, GST N-terminal spans 2 to 80 (PSYTLYYFNG…YLAREFGFYG (79 aa)). The 124-residue stretch at 82 to 205 (NNMDMFKVDC…YIKKRNNTAF (124 aa)) folds into the GST C-terminal domain.

The protein belongs to the GST superfamily. In terms of tissue distribution, lens.

S-crystallins are structural components of squids and octopi eye lens. Contains relatively little if any GST activity. The protein is S-crystallin SL11 of Nototodarus sloanii (Wellington flying squid).